A 539-amino-acid polypeptide reads, in one-letter code: Interleukin-2 receptor subunit beta (539 aa).

Residues 1–26 (MATIALPWSLSLYVFLLLLATPWASA) form the signal peptide. Topologically, residues 27 to 240 (AVKNCSHLEC…RTRPADPMKE (214 aa)) are extracellular. 4 N-linked (GlcNAc...) asparagine glycosylation sites follow: asparagine 30, asparagine 43, asparagine 55, and asparagine 71. Cysteines 36 and 46 form a disulfide. A disulfide bond links cysteine 74 and cysteine 86. In terms of domain architecture, Fibronectin type-III spans 135–235 (APHSLQVLHI…QPLTFRTRPA (101 aa)). N-linked (GlcNAc...) asparagine glycans are attached at residues asparagine 150 and asparagine 216. The short motif at 221 to 225 (WSPWS) is the WSXWS motif element. The helical transmembrane segment at 241 to 268 (ILPMSWLRYLLLVLGCFSGFFSCVYILV) threads the bilayer. Topologically, residues 269–539 (KCRYLGPWLK…LQAQDSVHLI (271 aa)) are cytoplasmic. A Box 1 motif motif is present at residues 281 to 289 (LKCHIPDPS). Disordered stretches follow at residues 395-419 (VEED…GEQD), 440-465 (PNTA…LPSL), and 477-516 (LERM…QGPI).

The protein belongs to the type I cytokine receptor family. Type 4 subfamily. Non-covalent dimer of an alpha and a beta subunit. IL2R exists in 3 different forms: a high affinity dimer, an intermediate affinity monomer (beta subunit), and a low affinity monomer (alpha subunit). The high and intermediate affinity forms also associate with a gamma subunit. Interacts with SHB upon interleukin stimulation.

Its subcellular location is the cell membrane. The protein localises to the cell surface. Receptor for interleukin-2. This beta subunit is involved in receptor mediated endocytosis and transduces the mitogenic signals of IL2. Probably in association with IL15RA, involved in the stimulation of neutrophil phagocytosis by IL15. This chain is Interleukin-2 receptor subunit beta (Il2rb), found in Mus musculus (Mouse).